The primary structure comprises 152 residues: Deoxyuridine 5'-triphosphate nucleotidohydrolase (152 aa).

Substrate is bound by residues 71–73, Asn84, 88–90, and Lys98; these read RSG and LID.

Belongs to the dUTPase family. Requires Mg(2+) as cofactor.

The catalysed reaction is dUTP + H2O = dUMP + diphosphate + H(+). It participates in pyrimidine metabolism; dUMP biosynthesis; dUMP from dCTP (dUTP route): step 2/2. Functionally, this enzyme is involved in nucleotide metabolism: it produces dUMP, the immediate precursor of thymidine nucleotides and it decreases the intracellular concentration of dUTP so that uracil cannot be incorporated into DNA. This is Deoxyuridine 5'-triphosphate nucleotidohydrolase from Legionella pneumophila (strain Paris).